The primary structure comprises 398 residues: MKQLTILGSTGSIGVSSLAVIKANPDKFTVRALSAGYNVKLMLEQCLTFQPTYASMADEASATALRQQLAEYGCKTEVLAGVQAACELAALDGVDQVMAAIVGAAGLLPTLAAIHAGKQVLLANKESLVTCGRLFMDAVEQSDAQLLPIDSEHNAIFQSLPEQIQRQLGYASLSKHGVERIILTGSGGPFRETPVSALADMTPDQACAHPNWSMGRKISVDSATMMNKGLEYIEARWLFNASAEQMEVIIHPQSVIHSMVRYRDGSVLAQLGSPDMRTPIAHAMAYPERVASGAKALDFCQIGALTFLAPDYARYPCLQLAIDACNHGQSATTTLNAANEIAVAAFLQSQIRFTDIAAVNQHVIEQLTLPEPTSVDDVLFIDSWARQVAAQTLTHYVR.

NADPH is bound by residues Thr10, Gly11, Ser12, Ile13, Gly36, Asn38, and Asn124. A 1-deoxy-D-xylulose 5-phosphate-binding site is contributed by Lys125. Glu126 serves as a coordination point for NADPH. A Mn(2+)-binding site is contributed by Asp150. Ser151, Glu152, Ser186, and His209 together coordinate 1-deoxy-D-xylulose 5-phosphate. Residue Glu152 coordinates Mn(2+). Gly215 is a binding site for NADPH. The 1-deoxy-D-xylulose 5-phosphate site is built by Ser222, Asn227, Lys228, and Glu231. Glu231 contacts Mn(2+).

This sequence belongs to the DXR family. In terms of assembly, homodimer. It depends on Mg(2+) as a cofactor. Requires Mn(2+) as cofactor.

It catalyses the reaction 2-C-methyl-D-erythritol 4-phosphate + NADP(+) = 1-deoxy-D-xylulose 5-phosphate + NADPH + H(+). The protein operates within isoprenoid biosynthesis; isopentenyl diphosphate biosynthesis via DXP pathway; isopentenyl diphosphate from 1-deoxy-D-xylulose 5-phosphate: step 1/6. Functionally, catalyzes the NADPH-dependent rearrangement and reduction of 1-deoxy-D-xylulose-5-phosphate (DXP) to 2-C-methyl-D-erythritol 4-phosphate (MEP). The chain is 1-deoxy-D-xylulose 5-phosphate reductoisomerase from Pectobacterium atrosepticum (strain SCRI 1043 / ATCC BAA-672) (Erwinia carotovora subsp. atroseptica).